We begin with the raw amino-acid sequence, 547 residues long: Chaperonin GroEL (547 aa).

ATP is bound by residues 30-33, lysine 51, 87-91, glycine 415, and aspartate 496; these read TLGP and DGTTT.

This sequence belongs to the chaperonin (HSP60) family. In terms of assembly, forms a cylinder of 14 subunits composed of two heptameric rings stacked back-to-back. Interacts with the co-chaperonin GroES.

The protein resides in the cytoplasm. The catalysed reaction is ATP + H2O + a folded polypeptide = ADP + phosphate + an unfolded polypeptide.. Together with its co-chaperonin GroES, plays an essential role in assisting protein folding. The GroEL-GroES system forms a nano-cage that allows encapsulation of the non-native substrate proteins and provides a physical environment optimized to promote and accelerate protein folding. This Actinobacillus succinogenes (strain ATCC 55618 / DSM 22257 / CCUG 43843 / 130Z) protein is Chaperonin GroEL.